The chain runs to 84 residues: Exodeoxyribonuclease 7 small subunit (84 aa).

Belongs to the XseB family. As to quaternary structure, heterooligomer composed of large and small subunits.

It localises to the cytoplasm. The enzyme catalyses Exonucleolytic cleavage in either 5'- to 3'- or 3'- to 5'-direction to yield nucleoside 5'-phosphates.. Bidirectionally degrades single-stranded DNA into large acid-insoluble oligonucleotides, which are then degraded further into small acid-soluble oligonucleotides. In Janthinobacterium sp. (strain Marseille) (Minibacterium massiliensis), this protein is Exodeoxyribonuclease 7 small subunit.